A 212-amino-acid polypeptide reads, in one-letter code: CRIB domain-containing protein RIC6 (212 aa).

In terms of domain architecture, CRIB spans 34-47 (IGNPTDVKHVAHIG). Residues 51–212 (PSANATAPSW…MPQFDNRDDF (162 aa)) are disordered. The span at 53 to 65 (ANATAPSWMTEFN) shows a compositional bias: polar residues. Residues 106–121 (AASEKGSPTKDKSSDK) are compositionally biased toward basic and acidic residues. Residues 192–202 (EYMSETGSVRS) are compositionally biased toward polar residues.

In terms of assembly, interacts with ARAC11/ROP1. Expressed in flowers and pollen.

It is found in the cell membrane. Functionally, functions as a downstream effector of Rho-related GTP binding proteins of the 'Rho of Plants' (ROPs) family. Participates in the propagation of ROP GTPase signals in specific cellular responses. Is involved in pollen tube growth regulation through its interaction with ARAC11/ROP1. The protein is CRIB domain-containing protein RIC6 (RIC6) of Arabidopsis thaliana (Mouse-ear cress).